We begin with the raw amino-acid sequence, 181 residues long: Adenylate kinase (181 aa).

10–15 (GAGKGT) is a binding site for ATP. Positions 30-59 (STGELFRRNIEKDTKLGHEAKKYLDAGDLV) are NMP. AMP is bound by residues T31, R36, 57–59 (DLV), 85–88 (GYPR), and Q92. An LID region spans residues 126–132 (GRGRADD). Residue R127 coordinates ATP. 2 residues coordinate AMP: R129 and R140. G166 contributes to the ATP binding site.

Belongs to the adenylate kinase family. As to quaternary structure, monomer.

It is found in the cytoplasm. The catalysed reaction is AMP + ATP = 2 ADP. Its pathway is purine metabolism; AMP biosynthesis via salvage pathway; AMP from ADP: step 1/1. Functionally, catalyzes the reversible transfer of the terminal phosphate group between ATP and AMP. Plays an important role in cellular energy homeostasis and in adenine nucleotide metabolism. This is Adenylate kinase from Mycobacterium leprae (strain Br4923).